Here is a 138-residue protein sequence, read N- to C-terminus: 1,4-dihydroxy-2-naphthoyl-CoA hydrolase (138 aa).

Residue Asp-15 is part of the active site.

It belongs to the 4-hydroxybenzoyl-CoA thioesterase family. DHNA-CoA hydrolase subfamily.

The enzyme catalyses 1,4-dihydroxy-2-naphthoyl-CoA + H2O = 1,4-dihydroxy-2-naphthoate + CoA + H(+). Its pathway is cofactor biosynthesis; phylloquinone biosynthesis. It participates in quinol/quinone metabolism; 1,4-dihydroxy-2-naphthoate biosynthesis; 1,4-dihydroxy-2-naphthoate from chorismate: step 7/7. Its function is as follows. Catalyzes the hydrolysis of 1,4-dihydroxy-2-naphthoyl-CoA (DHNA-CoA) to 1,4-dihydroxy-2-naphthoate (DHNA), a reaction involved in phylloquinone (vitamin K1) biosynthesis. The chain is 1,4-dihydroxy-2-naphthoyl-CoA hydrolase from Trichodesmium erythraeum (strain IMS101).